We begin with the raw amino-acid sequence, 253 residues long: 3-deoxy-manno-octulosonate cytidylyltransferase (253 aa).

Belongs to the KdsB family.

Its subcellular location is the cytoplasm. The enzyme catalyses 3-deoxy-alpha-D-manno-oct-2-ulosonate + CTP = CMP-3-deoxy-beta-D-manno-octulosonate + diphosphate. Its pathway is nucleotide-sugar biosynthesis; CMP-3-deoxy-D-manno-octulosonate biosynthesis; CMP-3-deoxy-D-manno-octulosonate from 3-deoxy-D-manno-octulosonate and CTP: step 1/1. It functions in the pathway bacterial outer membrane biogenesis; lipopolysaccharide biosynthesis. Its function is as follows. Activates KDO (a required 8-carbon sugar) for incorporation into bacterial lipopolysaccharide in Gram-negative bacteria. This chain is 3-deoxy-manno-octulosonate cytidylyltransferase, found in Acinetobacter baumannii (strain SDF).